The primary structure comprises 286 residues: MAWNLAIITLVGKDGTKLEATLRRENRGLMCLGNGWKDLSISNGLKSGKSFTLELILENGTPMLSLVSTQSTSHKSQKRECSKHSEKESISAVPSKGKKNRKARSNREERRDSSSAIQNRFVTFTPEDIRDCILILPSQFIKANGINNLGEITLLGQNRMKWFAYLLSMSKDGSLALGSGWKGICEANGVNTGEAFTLEYIDEQETAHGRAQVCFYGVFPGKSVRSFASLRSKWNDLFYDFLREQNLRVNPIIGVAICLCKHHYCNYNSCSLFKPRPKLSQKNLNS.

The TF-B3 1 DNA-binding region spans 1 to 70 (MAWNLAIITL…TPMLSLVSTQ (70 aa)). The tract at residues 68 to 114 (STQSTSHKSQKRECSKHSEKESISAVPSKGKKNRKARSNREERRDSS) is disordered. Residues 78-89 (KRECSKHSEKES) are compositionally biased toward basic and acidic residues. Residues 119 to 219 (NRFVTFTPED…RAQVCFYGVF (101 aa)) constitute a DNA-binding region (TF-B3 2).

Its subcellular location is the nucleus. This chain is B3 domain-containing protein REM11 (REM11), found in Arabidopsis thaliana (Mouse-ear cress).